The following is a 637-amino-acid chain: 1-deoxy-D-xylulose-5-phosphate synthase (637 aa).

Thiamine diphosphate contacts are provided by residues His74 and 115–117 (GHS). Asp146 provides a ligand contact to Mg(2+). Residues 147–148 (GA), Asn175, Tyr285, and Glu366 each bind thiamine diphosphate. Mg(2+) is bound at residue Asn175.

The protein belongs to the transketolase family. DXPS subfamily. In terms of assembly, homodimer. It depends on Mg(2+) as a cofactor. Requires thiamine diphosphate as cofactor.

It carries out the reaction D-glyceraldehyde 3-phosphate + pyruvate + H(+) = 1-deoxy-D-xylulose 5-phosphate + CO2. The protein operates within metabolic intermediate biosynthesis; 1-deoxy-D-xylulose 5-phosphate biosynthesis; 1-deoxy-D-xylulose 5-phosphate from D-glyceraldehyde 3-phosphate and pyruvate: step 1/1. Functionally, catalyzes the acyloin condensation reaction between C atoms 2 and 3 of pyruvate and glyceraldehyde 3-phosphate to yield 1-deoxy-D-xylulose-5-phosphate (DXP). The sequence is that of 1-deoxy-D-xylulose-5-phosphate synthase from Pelotomaculum thermopropionicum (strain DSM 13744 / JCM 10971 / SI).